Consider the following 126-residue polypeptide: Protein ApaG (126 aa).

Positions 2–126 (SALDTSIRVE…FRLATPGLLH (125 aa)) constitute an ApaG domain.

The sequence is that of Protein ApaG from Shewanella baltica (strain OS223).